A 203-amino-acid chain; its full sequence is Molybdenum cofactor guanylyltransferase (203 aa).

GTP-binding positions include 12–14 (LAG), K25, N53, D71, and D101. D101 provides a ligand contact to Mg(2+).

This sequence belongs to the MobA family. In terms of assembly, monomer. It depends on Mg(2+) as a cofactor.

The protein resides in the cytoplasm. It catalyses the reaction Mo-molybdopterin + GTP + H(+) = Mo-molybdopterin guanine dinucleotide + diphosphate. Functionally, transfers a GMP moiety from GTP to Mo-molybdopterin (Mo-MPT) cofactor (Moco or molybdenum cofactor) to form Mo-molybdopterin guanine dinucleotide (Mo-MGD) cofactor. In Methylibium petroleiphilum (strain ATCC BAA-1232 / LMG 22953 / PM1), this protein is Molybdenum cofactor guanylyltransferase.